We begin with the raw amino-acid sequence, 363 residues long: Trans-2,3-enoyl-CoA reductase-like (363 aa).

Ser37 is subject to Phosphoserine. Transmembrane regions (helical) follow at residues 143–163 (WTTV…LFYL), 216–235 (NLLK…AYYI), 250–270 (VAIS…INVV), and 311–331 (ISFT…LMSI).

Belongs to the steroid 5-alpha reductase family.

The protein resides in the membrane. It localises to the endoplasmic reticulum. The chain is Trans-2,3-enoyl-CoA reductase-like (TECRL) from Bos taurus (Bovine).